The primary structure comprises 153 residues: MPLLLTGRAFRRDLERERALAVYAPLEGGAETRLLRRLRAAGYRTELTSARGLGDPEAFLLGLHGVRPPHLGHHCVGRDAAVGEVQLVMPQLGPALASGAPVVLWMLEGQVLSSAEQASLLALCEREPRLHMVLELGGSRSLRWKPLRAALAA.

This sequence belongs to the complex I NdhN subunit family. In terms of assembly, NDH-1 can be composed of about 15 different subunits; different subcomplexes with different compositions have been identified which probably have different functions.

It is found in the cellular thylakoid membrane. It carries out the reaction a plastoquinone + NADH + (n+1) H(+)(in) = a plastoquinol + NAD(+) + n H(+)(out). The catalysed reaction is a plastoquinone + NADPH + (n+1) H(+)(in) = a plastoquinol + NADP(+) + n H(+)(out). Functionally, NDH-1 shuttles electrons from an unknown electron donor, via FMN and iron-sulfur (Fe-S) centers, to quinones in the respiratory and/or the photosynthetic chain. The immediate electron acceptor for the enzyme in this species is believed to be plastoquinone. Couples the redox reaction to proton translocation, and thus conserves the redox energy in a proton gradient. Cyanobacterial NDH-1 also plays a role in inorganic carbon-concentration. In Synechococcus sp. (strain RCC307), this protein is NAD(P)H-quinone oxidoreductase subunit N.